Consider the following 217-residue polypeptide: Octanoyltransferase (217 aa).

A BPL/LPL catalytic domain is found at 33 to 208 (SSSQDEIWLV…KLCSLLGIAS (176 aa)). Substrate contacts are provided by residues 72-79 (RGGQVTYH), 139-141 (SIG), and 152-154 (GLA). Cys-170 functions as the Acyl-thioester intermediate in the catalytic mechanism.

This sequence belongs to the LipB family.

The protein resides in the cytoplasm. It carries out the reaction octanoyl-[ACP] + L-lysyl-[protein] = N(6)-octanoyl-L-lysyl-[protein] + holo-[ACP] + H(+). The protein operates within protein modification; protein lipoylation via endogenous pathway; protein N(6)-(lipoyl)lysine from octanoyl-[acyl-carrier-protein]: step 1/2. Catalyzes the transfer of endogenously produced octanoic acid from octanoyl-acyl-carrier-protein onto the lipoyl domains of lipoate-dependent enzymes. Lipoyl-ACP can also act as a substrate although octanoyl-ACP is likely to be the physiological substrate. This is Octanoyltransferase from Pseudoalteromonas atlantica (strain T6c / ATCC BAA-1087).